A 22-amino-acid chain; its full sequence is LKCEWDGLVGTRGEIAKETIER.

The protein belongs to the protease inhibitor I13 (potato type I serine protease inhibitor) family. Heterodimer of an A chain and a B chain, linked by a disulfide bond.

Functionally, inhibitor of chymotrypsin. The protein is Cytin chain B of Theromyzon tessulatum (Duck leech).